A 162-amino-acid chain; its full sequence is 2-C-methyl-D-erythritol 2,4-cyclodiphosphate synthase (162 aa).

Asp-12 and His-14 together coordinate a divalent metal cation. Residues 12–14 (DVH) and 38–39 (HS) each bind 4-CDP-2-C-methyl-D-erythritol 2-phosphate. His-46 contributes to the a divalent metal cation binding site. Residues 60–62 (DIG), 65–69 (FPDTD), Phe-143, and Arg-146 each bind 4-CDP-2-C-methyl-D-erythritol 2-phosphate.

Belongs to the IspF family. In terms of assembly, homotrimer. Requires a divalent metal cation as cofactor.

It catalyses the reaction 4-CDP-2-C-methyl-D-erythritol 2-phosphate = 2-C-methyl-D-erythritol 2,4-cyclic diphosphate + CMP. Its pathway is isoprenoid biosynthesis; isopentenyl diphosphate biosynthesis via DXP pathway; isopentenyl diphosphate from 1-deoxy-D-xylulose 5-phosphate: step 4/6. Involved in the biosynthesis of isopentenyl diphosphate (IPP) and dimethylallyl diphosphate (DMAPP), two major building blocks of isoprenoid compounds. Catalyzes the conversion of 4-diphosphocytidyl-2-C-methyl-D-erythritol 2-phosphate (CDP-ME2P) to 2-C-methyl-D-erythritol 2,4-cyclodiphosphate (ME-CPP) with a corresponding release of cytidine 5-monophosphate (CMP). This is 2-C-methyl-D-erythritol 2,4-cyclodiphosphate synthase from Azoarcus sp. (strain BH72).